Here is a 62-residue protein sequence, read N- to C-terminus: Probable tautomerase SH1546 (62 aa).

Pro2 functions as the Proton acceptor; via imino nitrogen in the catalytic mechanism.

Belongs to the 4-oxalocrotonate tautomerase family.

The protein is Probable tautomerase SH1546 of Staphylococcus haemolyticus (strain JCSC1435).